The sequence spans 195 residues: MIGRIAGLLLEKHPPLVLVDVNGIGYEIDVPMSTFCRLPGIGEQVTLHTHFWVREDAHLLFGFMTEPERVLFRQLTKISGIGARTGLAILSGLSVNDLHQIVVSQDSTRLTRIPGIGKKTAERLLLELRDKISPAITLPETGTAMASSTDKDILNALSALGYNDREANWAVGQLSEGVTVSDGIMQSLRLLSKAK.

The tract at residues 1 to 64 (MIGRIAGLLL…EDAHLLFGFM (64 aa)) is domain I. Residues 65–140 (TEPERVLFRQ…KISPAITLPE (76 aa)) are domain II. The flexible linker stretch occupies residues 140-144 (ETGTA). Positions 145-195 (MASSTDKDILNALSALGYNDREANWAVGQLSEGVTVSDGIMQSLRLLSKAK) are domain III.

Belongs to the RuvA family. Homotetramer. Forms an RuvA(8)-RuvB(12)-Holliday junction (HJ) complex. HJ DNA is sandwiched between 2 RuvA tetramers; dsDNA enters through RuvA and exits via RuvB. An RuvB hexamer assembles on each DNA strand where it exits the tetramer. Each RuvB hexamer is contacted by two RuvA subunits (via domain III) on 2 adjacent RuvB subunits; this complex drives branch migration. In the full resolvosome a probable DNA-RuvA(4)-RuvB(12)-RuvC(2) complex forms which resolves the HJ.

It is found in the cytoplasm. Its function is as follows. The RuvA-RuvB-RuvC complex processes Holliday junction (HJ) DNA during genetic recombination and DNA repair, while the RuvA-RuvB complex plays an important role in the rescue of blocked DNA replication forks via replication fork reversal (RFR). RuvA specifically binds to HJ cruciform DNA, conferring on it an open structure. The RuvB hexamer acts as an ATP-dependent pump, pulling dsDNA into and through the RuvAB complex. HJ branch migration allows RuvC to scan DNA until it finds its consensus sequence, where it cleaves and resolves the cruciform DNA. The sequence is that of Holliday junction branch migration complex subunit RuvA from Nitrosomonas europaea (strain ATCC 19718 / CIP 103999 / KCTC 2705 / NBRC 14298).